The primary structure comprises 242 residues: Megakaryocyte and platelet inhibitory receptor G6b (242 aa).

A signal peptide spans 1 to 17 (MALVLPLLPLLLSKVQG). Residues Asn-32 and Asn-112 are each glycosylated (N-linked (GlcNAc...) asparagine). The helical transmembrane segment at 141–161 (VLIPLLGVGLVLGLGVAGVVW) threads the bilayer. 2 consecutive short sequence motifs (ITIM motif) follow at residues 210–215 (LHYADL) and 236–241 (TVYAVV). Tyr-212 carries the post-translational modification Phosphotyrosine.

In terms of assembly, interacts (via ITIM motif) with PTPN6 and PTPN11. Binds to heparin. N-glycosylated. In terms of processing, may be O-glycosylated. Post-translationally, phosphorylated. In terms of tissue distribution, expressed in mature megakaryocytes and platelets. Not expressed by immature megakaryocytes.

Its subcellular location is the cell membrane. Its function is as follows. Inhibitory receptor that acts as a critical regulator of hematopoietic lineage differentiation, megakaryocyte function and platelet production. Inhibits platelet aggregation and activation by agonists such as ADP and collagen-related peptide. This regulation of megakaryocate function as well as platelet production ann activation is done through the inhibition (via the 2 ITIM motifs) of the receptors CLEC1B and GP6:FcRgamma signaling. Appears to operate in a calcium-independent manner. The chain is Megakaryocyte and platelet inhibitory receptor G6b from Mus musculus (Mouse).